Reading from the N-terminus, the 508-residue chain is UTP--glucose-1-phosphate uridylyltransferase (508 aa).

Ser-2 carries the post-translational modification Blocked amino end (Ser). Ser-13 is subject to Phosphoserine. UTP is bound by residues Leu-113–Gly-116, Lys-127, Gln-190, and Gly-222. Gly-115–Gly-116 serves as a coordination point for substrate. Residue Lys-127 participates in Mg(2+) binding. Substrate-binding positions include His-223 and Asn-251–Asp-253. UTP contacts are provided by Asp-253 and Lys-396. Asp-253 contributes to the Mg(2+) binding site. Lys-396 is a catalytic residue. Thr-426 is subject to Phosphothreonine. Position 434 is a phosphoserine (Ser-434). The residue at position 438 (Lys-438) is an N6-acetyllysine. A phosphoserine mark is found at Ser-448 and Ser-461. An oligomerization region spans residues His-457–His-508. Residues Asn-502–Leu-503 form a critical for end-to-end subunit interaction region.

It belongs to the UDPGP type 1 family. As to quaternary structure, homooctamer.

The protein resides in the cytoplasm. It catalyses the reaction alpha-D-glucose 1-phosphate + UTP + H(+) = UDP-alpha-D-glucose + diphosphate. The protein operates within glycan biosynthesis; glycogen biosynthesis. Its function is as follows. UTP--glucose-1-phosphate uridylyltransferase catalyzing the conversion of glucose-1-phosphate into UDP-glucose, a crucial precursor for the production of glycogen. This chain is UTP--glucose-1-phosphate uridylyltransferase (UGP2), found in Bos taurus (Bovine).